A 271-amino-acid polypeptide reads, in one-letter code: L-aspartate dehydrogenase (271 aa).

Positions 124 and 192 each coordinate NAD(+). Residue His-222 is part of the active site.

This sequence belongs to the L-aspartate dehydrogenase family.

The catalysed reaction is L-aspartate + NADP(+) + H2O = oxaloacetate + NH4(+) + NADPH + H(+). It catalyses the reaction L-aspartate + NAD(+) + H2O = oxaloacetate + NH4(+) + NADH + H(+). It functions in the pathway cofactor biosynthesis; NAD(+) biosynthesis; iminoaspartate from L-aspartate (dehydrogenase route): step 1/1. In terms of biological role, specifically catalyzes the NAD or NADP-dependent dehydrogenation of L-aspartate to iminoaspartate. In Methanococcoides burtonii (strain DSM 6242 / NBRC 107633 / OCM 468 / ACE-M), this protein is L-aspartate dehydrogenase.